The chain runs to 479 residues: Aspartyl/glutamyl-tRNA(Asn/Gln) amidotransferase subunit B (479 aa).

It belongs to the GatB/GatE family. GatB subfamily. As to quaternary structure, heterotrimer of A, B and C subunits.

It carries out the reaction L-glutamyl-tRNA(Gln) + L-glutamine + ATP + H2O = L-glutaminyl-tRNA(Gln) + L-glutamate + ADP + phosphate + H(+). It catalyses the reaction L-aspartyl-tRNA(Asn) + L-glutamine + ATP + H2O = L-asparaginyl-tRNA(Asn) + L-glutamate + ADP + phosphate + 2 H(+). Allows the formation of correctly charged Asn-tRNA(Asn) or Gln-tRNA(Gln) through the transamidation of misacylated Asp-tRNA(Asn) or Glu-tRNA(Gln) in organisms which lack either or both of asparaginyl-tRNA or glutaminyl-tRNA synthetases. The reaction takes place in the presence of glutamine and ATP through an activated phospho-Asp-tRNA(Asn) or phospho-Glu-tRNA(Gln). The sequence is that of Aspartyl/glutamyl-tRNA(Asn/Gln) amidotransferase subunit B from Streptococcus pyogenes serotype M1.